Here is a 269-residue protein sequence, read N- to C-terminus: Intron-associated endonuclease 3 (269 aa).

Functionally, this endonuclease is specific to the nrdB gene splice junction and is involved in intron homing. The protein is Intron-associated endonuclease 3 (ITEVIIIR) of Enterobacteria phage RB3 (Bacteriophage RB3).